A 330-amino-acid chain; its full sequence is Putative protein N-methyltransferase FAM86B1 (330 aa).

S-adenosyl-L-methionine-binding positions include tryptophan 139, 165–167 (GSG), tryptophan 228, and alanine 247.

This sequence belongs to the class I-like SAM-binding methyltransferase superfamily. EEF2KMT family.

The polypeptide is Putative protein N-methyltransferase FAM86B1 (Homo sapiens (Human)).